Consider the following 132-residue polypeptide: Small ribosomal subunit protein uS11 (132 aa).

The protein belongs to the universal ribosomal protein uS11 family. Part of the 30S ribosomal subunit. Interacts with proteins S7 and S18. Binds to IF-3.

In terms of biological role, located on the platform of the 30S subunit, it bridges several disparate RNA helices of the 16S rRNA. Forms part of the Shine-Dalgarno cleft in the 70S ribosome. The polypeptide is Small ribosomal subunit protein uS11 (Lachnoclostridium phytofermentans (strain ATCC 700394 / DSM 18823 / ISDg) (Clostridium phytofermentans)).